We begin with the raw amino-acid sequence, 169 residues long: Holo-[acyl-carrier-protein] synthase (169 aa).

2 residues coordinate Mg(2+): D8 and E50.

This sequence belongs to the P-Pant transferase superfamily. AcpS family. Requires Mg(2+) as cofactor.

The protein localises to the cytoplasm. It catalyses the reaction apo-[ACP] + CoA = holo-[ACP] + adenosine 3',5'-bisphosphate + H(+). Functionally, transfers the 4'-phosphopantetheine moiety from coenzyme A to a Ser of acyl-carrier-protein. This chain is Holo-[acyl-carrier-protein] synthase, found in Thermotoga maritima (strain ATCC 43589 / DSM 3109 / JCM 10099 / NBRC 100826 / MSB8).